Reading from the N-terminus, the 291-residue chain is Lys-63-specific deubiquitinase BRCC36-like (291 aa).

The region spanning 12–179 is the MPN domain; the sequence is VYLESDAFLV…YTCFQSVQAS (168 aa). Zn(2+) is bound by residues H122, H124, and D135. The short motif at 122 to 135 is the JAMM motif element; sequence HSHPHITVWPSHVD. The stretch at 259–286 forms a coiled coil; the sequence is LQWLEDRLEQNQQRLQELEQEKEDLMEE.

It belongs to the peptidase M67A family. BRCC36 subfamily.

Functionally, metalloprotease that specifically cleaves 'Lys-63'-linked polyubiquitin chains. This Mus musculus (Mouse) protein is Lys-63-specific deubiquitinase BRCC36-like.